We begin with the raw amino-acid sequence, 534 residues long: Phosphoenolpyruvate carboxykinase (ATP) (534 aa).

Arginine 59, tyrosine 200, and lysine 206 together coordinate substrate. Residues lysine 206, histidine 225, and 242–250 (GLSGTGKTT) each bind ATP. The Mn(2+) site is built by lysine 206 and histidine 225. Aspartate 263 is a binding site for Mn(2+). Residues glutamate 291, arginine 327, 443-444 (RI), and threonine 449 contribute to the ATP site. Arginine 327 contributes to the substrate binding site.

It belongs to the phosphoenolpyruvate carboxykinase (ATP) family. Requires Mn(2+) as cofactor.

Its subcellular location is the cytoplasm. The catalysed reaction is oxaloacetate + ATP = phosphoenolpyruvate + ADP + CO2. Its pathway is carbohydrate biosynthesis; gluconeogenesis. Involved in the gluconeogenesis. Catalyzes the conversion of oxaloacetate (OAA) to phosphoenolpyruvate (PEP) through direct phosphoryl transfer between the nucleoside triphosphate and OAA. This is Phosphoenolpyruvate carboxykinase (ATP) from Lachnospira eligens (strain ATCC 27750 / DSM 3376 / VPI C15-48 / C15-B4) (Eubacterium eligens).